Consider the following 235-residue polypeptide: 15,16-dihydrobiliverdin:ferredoxin oxidoreductase (235 aa).

It belongs to the HY2 family.

The catalysed reaction is 15,16-dihydrobiliverdin + oxidized 2[4Fe-4S]-[ferredoxin] = biliverdin IXalpha + reduced 2[4Fe-4S]-[ferredoxin] + 2 H(+). Catalyzes the two-electron reduction of biliverdin IX-alpha at the C15 methine bridge. This chain is 15,16-dihydrobiliverdin:ferredoxin oxidoreductase (pebA), found in Parasynechococcus marenigrum (strain WH8102).